Reading from the N-terminus, the 436-residue chain is tRNA-2-methylthio-N(6)-dimethylallyladenosine synthase (436 aa).

The 116-residue stretch at 5-120 (KKLFIQTLGC…IKDVVDVKGA (116 aa)) folds into the MTTase N-terminal domain. 6 residues coordinate [4Fe-4S] cluster: cysteine 14, cysteine 51, cysteine 83, cysteine 152, cysteine 156, and cysteine 159. Positions 138 to 372 (KTNKYRASVN…IELHKRYLEE (235 aa)) constitute a Radical SAM core domain. The TRAM domain occupies 375–436 (PKLIGETLNI…RTSLKGEVVN (62 aa)).

It belongs to the methylthiotransferase family. MiaB subfamily. Monomer. [4Fe-4S] cluster serves as cofactor.

It is found in the cytoplasm. It carries out the reaction N(6)-dimethylallyladenosine(37) in tRNA + (sulfur carrier)-SH + AH2 + 2 S-adenosyl-L-methionine = 2-methylsulfanyl-N(6)-dimethylallyladenosine(37) in tRNA + (sulfur carrier)-H + 5'-deoxyadenosine + L-methionine + A + S-adenosyl-L-homocysteine + 2 H(+). In terms of biological role, catalyzes the methylthiolation of N6-(dimethylallyl)adenosine (i(6)A), leading to the formation of 2-methylthio-N6-(dimethylallyl)adenosine (ms(2)i(6)A) at position 37 in tRNAs that read codons beginning with uridine. This Aliarcobacter butzleri (strain RM4018) (Arcobacter butzleri) protein is tRNA-2-methylthio-N(6)-dimethylallyladenosine synthase.